Reading from the N-terminus, the 227-residue chain is Phosphoribosylformylglycinamidine synthase subunit PurQ (227 aa).

The Glutamine amidotransferase type-1 domain occupies 3–225 (FAVIVFPGSN…LKQWRETYVV (223 aa)). Cysteine 86 serves as the catalytic Nucleophile. Catalysis depends on residues histidine 194 and glutamate 196.

In terms of assembly, part of the FGAM synthase complex composed of 1 PurL, 1 PurQ and 2 PurS subunits.

The protein localises to the cytoplasm. It catalyses the reaction N(2)-formyl-N(1)-(5-phospho-beta-D-ribosyl)glycinamide + L-glutamine + ATP + H2O = 2-formamido-N(1)-(5-O-phospho-beta-D-ribosyl)acetamidine + L-glutamate + ADP + phosphate + H(+). It carries out the reaction L-glutamine + H2O = L-glutamate + NH4(+). It participates in purine metabolism; IMP biosynthesis via de novo pathway; 5-amino-1-(5-phospho-D-ribosyl)imidazole from N(2)-formyl-N(1)-(5-phospho-D-ribosyl)glycinamide: step 1/2. In terms of biological role, part of the phosphoribosylformylglycinamidine synthase complex involved in the purines biosynthetic pathway. Catalyzes the ATP-dependent conversion of formylglycinamide ribonucleotide (FGAR) and glutamine to yield formylglycinamidine ribonucleotide (FGAM) and glutamate. The FGAM synthase complex is composed of three subunits. PurQ produces an ammonia molecule by converting glutamine to glutamate. PurL transfers the ammonia molecule to FGAR to form FGAM in an ATP-dependent manner. PurS interacts with PurQ and PurL and is thought to assist in the transfer of the ammonia molecule from PurQ to PurL. The protein is Phosphoribosylformylglycinamidine synthase subunit PurQ of Bacillus mycoides (strain KBAB4) (Bacillus weihenstephanensis).